The sequence spans 219 residues: Orotate phosphoribosyltransferase (219 aa).

Lys-26 is a binding site for 5-phospho-alpha-D-ribose 1-diphosphate. Position 34–35 (34–35 (FF)) interacts with orotate. Residues 72–73 (YK), Arg-98, Lys-99, Lys-102, His-104, and 124–132 (DDVITAGTA) each bind 5-phospho-alpha-D-ribose 1-diphosphate. Residues Thr-128 and Arg-156 each coordinate orotate.

Belongs to the purine/pyrimidine phosphoribosyltransferase family. PyrE subfamily. As to quaternary structure, homodimer. Requires Mg(2+) as cofactor.

It catalyses the reaction orotidine 5'-phosphate + diphosphate = orotate + 5-phospho-alpha-D-ribose 1-diphosphate. The protein operates within pyrimidine metabolism; UMP biosynthesis via de novo pathway; UMP from orotate: step 1/2. Functionally, catalyzes the transfer of a ribosyl phosphate group from 5-phosphoribose 1-diphosphate to orotate, leading to the formation of orotidine monophosphate (OMP). The sequence is that of Orotate phosphoribosyltransferase from Stenotrophomonas maltophilia (strain R551-3).